Reading from the N-terminus, the 290-residue chain is Shikimate dehydrogenase (NADP(+)) (290 aa).

Shikimate-binding positions include 20–22 (SLS) and Thr-67. Lys-71 (proton acceptor) is an active-site residue. Positions 92 and 107 each coordinate shikimate. NADP(+)-binding positions include 132 to 136 (GAGGA) and Met-228. Tyr-230 is a binding site for shikimate. Residue Gly-251 participates in NADP(+) binding.

It belongs to the shikimate dehydrogenase family. Homodimer.

It catalyses the reaction shikimate + NADP(+) = 3-dehydroshikimate + NADPH + H(+). The protein operates within metabolic intermediate biosynthesis; chorismate biosynthesis; chorismate from D-erythrose 4-phosphate and phosphoenolpyruvate: step 4/7. Involved in the biosynthesis of the chorismate, which leads to the biosynthesis of aromatic amino acids. Catalyzes the reversible NADPH linked reduction of 3-dehydroshikimate (DHSA) to yield shikimate (SA). The sequence is that of Shikimate dehydrogenase (NADP(+)) from Citrifermentans bemidjiense (strain ATCC BAA-1014 / DSM 16622 / JCM 12645 / Bem) (Geobacter bemidjiensis).